Here is an 82-residue protein sequence, read N- to C-terminus: Delta-ctenitoxin-Pn2c (82 aa).

An N-terminal signal peptide occupies residues 1–17 (MKVAILFLSILVLAVAS). A propeptide spanning residues 18–34 (ESIEESRDDFAVEELGR) is cleaved from the precursor. 5 disulfides stabilise this stretch: Cys-37-Cys-51, Cys-44-Cys-57, Cys-48-Cys-80, Cys-50-Cys-65, and Cys-59-Cys-63.

In terms of tissue distribution, expressed by the venom gland.

Its subcellular location is the secreted. Reversible inhibitor of voltage-gated sodium channels (Nav). Delays the fast inactivation kinetics of neuronal-type sodium channels. In vivo, it induces rat penile erection. This effect may be due to the neuronal nitric oxide synthase (NOS1), since one of its selective inhibitor completely abolishes all the toxic effects of the toxin. This toxin also causes scratching, lacrimation, hypersalivation, sweating and agitation followed by spastic paralysis of the anterior and posterior extremities and death at dose levels of 0.24 mg/mouse. It is also insecticidal to the larval and adult forms of the house fly. The protein is Delta-ctenitoxin-Pn2c of Phoneutria nigriventer (Brazilian armed spider).